The sequence spans 560 residues: DNA ligase B (560 aa).

Residue K124 is the N6-AMP-lysine intermediate of the active site.

This sequence belongs to the NAD-dependent DNA ligase family. LigB subfamily.

It catalyses the reaction NAD(+) + (deoxyribonucleotide)n-3'-hydroxyl + 5'-phospho-(deoxyribonucleotide)m = (deoxyribonucleotide)n+m + AMP + beta-nicotinamide D-nucleotide.. In terms of biological role, catalyzes the formation of phosphodiester linkages between 5'-phosphoryl and 3'-hydroxyl groups in double-stranded DNA using NAD as a coenzyme and as the energy source for the reaction. The protein is DNA ligase B of Escherichia coli (strain SMS-3-5 / SECEC).